The sequence spans 701 residues: MVVSTFTDMDTFPNNFPPGGDSGLTGSQSEFQKMLIDERLRCEHHKANYQTLKAEHTRLQNEHVKLQNELKHLFNEKQTQQEKLQLLLEELRGELVEKTKDLEEMKLQILTPQKLELLRAQIQQELETPMRERFRNLDEEVEKYRAVYNKLRYEHTFLKSEFEHQKEEYARILDEGKIKYESEIARLEEDKEELRNQLLNVDLTKDSKRVEQLAREKVYLCQKLKGLEAEVAELKAEKENSEAQVENAQRIQVRQLAEMQATVRSLEAEKQSANLRAERLEKELQSSSEQNTFLINKLHKAEREINTLSSKVKELKHSNKLEITDIKLETARAKSELERERNKIQSELDGLQSDNEILKAAVEHHKVLLVEKDRELIRKVQAAKEEGYQKLVVLQDEKLELENRLADLEKMKVEHDVWRQSEKDQYEEKLRASQMAEEITRKELQSVRLKLQQQIVTIENAEKEKNENSDLKQQISSLQIQVTSLAQSENDLLNSNQMLKEMVERLKQECRNFRSQAEKAQLEAEKTLEEKQIQWLEEKHKLHERITDREEKYNQAKEKLQRAAIAQKKRKSLHENKLKRLQEKVEVLEAKKEELETENQVLNRQNVPFEDYTRLQKRLKDIQRRHNEFRSLILVPNMPPTASINPVSFQSSAMVPSMELPFPPHMQEEQHQRELSLLRKRLEELETTQRKQLEELGSSGE.

Residues 1-14 (MVVSTFTDMDTFPN) show a composition bias toward polar residues. Residues 1 to 23 (MVVSTFTDMDTFPNNFPPGGDSG) are disordered. Coiled coils occupy residues 40-634 (LRCE…SLIL) and 665-698 (HMQE…ELGS). Serine 698 is modified (phosphoserine).

Belongs to the CEP83 family. As to quaternary structure, interacts with CEP164 and IFT20.

Its subcellular location is the cytoplasm. The protein localises to the cytoskeleton. The protein resides in the microtubule organizing center. It localises to the centrosome. It is found in the centriole. Functionally, component of the distal appendage region of the centriole involved in the initiation of primary cilium assembly. May collaborate with IFT20 in the trafficking of ciliary membrane proteins from the Golgi complex to the cilium during the initiation of primary cilium assembly. In Homo sapiens (Human), this protein is Centrosomal protein of 83 kDa (CEP83).